We begin with the raw amino-acid sequence, 320 residues long: ATP-dependent 6-phosphofructokinase (320 aa).

Gly-12 contributes to the ATP binding site. ADP is bound at residue 22–26 (RGVVR). Residues 73–74 (RF) and 103–106 (GDGS) contribute to the ATP site. Asp-104 provides a ligand contact to Mg(2+). 126 to 128 (TID) is a substrate binding site. Asp-128 serves as the catalytic Proton acceptor. Arg-155 provides a ligand contact to ADP. Residues Arg-163 and 170 to 172 (MGR) contribute to the substrate site. Residues 186-188 (GCE), Lys-212, and 214-216 (KKH) each bind ADP. Substrate is bound by residues Glu-223, Arg-244, and 250–253 (HIQR).

It belongs to the phosphofructokinase type A (PFKA) family. ATP-dependent PFK group I subfamily. Prokaryotic clade 'B1' sub-subfamily. Homotetramer. Requires Mg(2+) as cofactor.

The protein resides in the cytoplasm. It catalyses the reaction beta-D-fructose 6-phosphate + ATP = beta-D-fructose 1,6-bisphosphate + ADP + H(+). Its pathway is carbohydrate degradation; glycolysis; D-glyceraldehyde 3-phosphate and glycerone phosphate from D-glucose: step 3/4. Allosterically activated by ADP and other diphosphonucleosides, and allosterically inhibited by phosphoenolpyruvate. In terms of biological role, catalyzes the phosphorylation of D-fructose 6-phosphate to fructose 1,6-bisphosphate by ATP, the first committing step of glycolysis. This is ATP-dependent 6-phosphofructokinase from Aliivibrio fischeri (strain ATCC 700601 / ES114) (Vibrio fischeri).